The following is a 429-amino-acid chain: MYTKSVELHKEALEHIVGGVNSPSRSYKAVGGGSPVAMEKANGAYFWDVDGNQYIDYLAAYGPIITGHAHPHITEAIKTAAENGVLYGTPTKHEVTFAKMLKEAIPSLDKVRFVNSGTEAVMTTIRVARAYTGRTKIIKFAGCYHGHSDLVLVAAGSGPSTLGTPDSAGVPKSIANEVITVPFNDIESYKAALDKWGSEIAAVLVEPIVGNFGIVEPEEGFLEQVNELTHKAGALVIYDEVITAFRFMYGGAQDLLQVKPDLTALGKIIGGGLPIGAYGGKKEIMEQVAPLGPAYQAGTMAGNPASILSGIACLEVLKEEGVYERLDELGARLEQGILAHAETHGITITVNRLKGALTVYFTDEKIVNYEQAENTDGEAFAKFFKLMLERGINLAPSKYEAWFITTAHTEEDIDATLQAVEDAFRHMKK.

At Lys267 the chain carries N6-(pyridoxal phosphate)lysine.

This sequence belongs to the class-III pyridoxal-phosphate-dependent aminotransferase family. HemL subfamily. As to quaternary structure, homodimer. Pyridoxal 5'-phosphate serves as cofactor.

It is found in the cytoplasm. It catalyses the reaction (S)-4-amino-5-oxopentanoate = 5-aminolevulinate. It functions in the pathway porphyrin-containing compound metabolism; protoporphyrin-IX biosynthesis; 5-aminolevulinate from L-glutamyl-tRNA(Glu): step 2/2. This is Glutamate-1-semialdehyde 2,1-aminomutase 1 from Bacillus velezensis (strain DSM 23117 / BGSC 10A6 / LMG 26770 / FZB42) (Bacillus amyloliquefaciens subsp. plantarum).